The primary structure comprises 65 residues: Small ribosomal subunit protein bS21 (65 aa).

Belongs to the bacterial ribosomal protein bS21 family.

In Geotalea daltonii (strain DSM 22248 / JCM 15807 / FRC-32) (Geobacter daltonii), this protein is Small ribosomal subunit protein bS21.